A 95-amino-acid chain; its full sequence is Co-chaperonin GroES (95 aa).

This sequence belongs to the GroES chaperonin family. In terms of assembly, heptamer of 7 subunits arranged in a ring. Interacts with the chaperonin GroEL.

Its subcellular location is the cytoplasm. Its function is as follows. Together with the chaperonin GroEL, plays an essential role in assisting protein folding. The GroEL-GroES system forms a nano-cage that allows encapsulation of the non-native substrate proteins and provides a physical environment optimized to promote and accelerate protein folding. GroES binds to the apical surface of the GroEL ring, thereby capping the opening of the GroEL channel. The protein is Co-chaperonin GroES of Oleidesulfovibrio alaskensis (strain ATCC BAA-1058 / DSM 17464 / G20) (Desulfovibrio alaskensis).